The primary structure comprises 789 residues: Zinc finger protein GLIS1 (789 aa).

Composition is skewed to basic and acidic residues over residues 1-16 (MHCE…RPKE) and 63-74 (RAHDLLRPRSPR). Disordered stretches follow at residues 1–29 (MHCE…GPVS), 53–93 (LLPR…YGHS), and 278–304 (PPLP…QEGS). A compositionally biased stretch (polar residues) spans 80–92 (KTGSGKVNGSYGH). The C2H2-type 1 zinc-finger motif lies at 366 to 391 (QACRWVDCCAAYEQQEELVRHIEKSH). The C2H2-type 2; atypical zinc-finger motif lies at 400 to 427 (FTCFWAGCVRRYKPFNARYKLLIHMRVH). 3 consecutive C2H2-type zinc fingers follow at residues 433–457 (NKCM…LRSH), 463–487 (YLCQ…QRTH), and 493–517 (YACQ…VKAH). 2 disordered regions span residues 506–529 (DPSS…KKLH) and 573–684 (VYPG…QGYQ). The Bipartite nuclear localization signal signature appears at 511 to 527 (RKHVKAHSAKEQQVRKK). The span at 648–658 (ASQSQSPGGQS) shows a compositional bias: low complexity.

Belongs to the GLI C2H2-type zinc-finger protein family. As to quaternary structure, interacts with KLF4. Interacts with POU5F1 and/or POU5F1B. Interacts with SOX2. As to expression, in the adult, expressed highly in placenta and kidney and at lower levels in the testis, brain, colon, brown fat tissue and thymus. During embryo development, expressed in the frontal nasal region, branchial arches, somites, vibrissal and hair follicles, limb buds, craniofacial regions, ventral part of the tail, intervertebral disks, teeth, eyes and kidney.

It localises to the nucleus. Acts both as a repressor and an ctivator of transcription. Binds to the consensus sequence 5'-GACCACCCAC-3'. By controlling the expression of genes involved in cell differentiation inhibits the lineage commitment of multipotent cells. Prevents, for instance, the differentiation of multipotent mesenchymal cells into adipocyte and osteoblast. The polypeptide is Zinc finger protein GLIS1 (Mus musculus (Mouse)).